Reading from the N-terminus, the 181-residue chain is ATP-dependent protease subunit HslV (181 aa).

Residue Thr9 is part of the active site. 3 residues coordinate Na(+): Ala166, Cys169, and Thr172.

Belongs to the peptidase T1B family. HslV subfamily. A double ring-shaped homohexamer of HslV is capped on each side by a ring-shaped HslU homohexamer. The assembly of the HslU/HslV complex is dependent on binding of ATP.

It is found in the cytoplasm. The enzyme catalyses ATP-dependent cleavage of peptide bonds with broad specificity.. Allosterically activated by HslU binding. Functionally, protease subunit of a proteasome-like degradation complex believed to be a general protein degrading machinery. The sequence is that of ATP-dependent protease subunit HslV from Staphylococcus aureus (strain bovine RF122 / ET3-1).